The primary structure comprises 416 residues: Formyl-CoA:oxalate CoA-transferase (416 aa).

CoA is bound by residues 17–18 (QS), arginine 38, 72–75 (LNTK), 96–98 (NFH), histidine 104, and 137–140 (KAYE). The active-site Nucleophile is aspartate 169. 248-250 (GGQ) contributes to the substrate binding site. 273-275 (QEQ) provides a ligand contact to CoA.

This sequence belongs to the CoA-transferase III family. Frc subfamily. As to quaternary structure, homodimer.

The enzyme catalyses formyl-CoA + oxalate = oxalyl-CoA + formate. The protein operates within metabolic intermediate degradation; oxalate degradation; CO(2) and formate from oxalate: step 1/2. Involved in the catabolism of oxalate and in the adapatation to low pH via the induction of the oxalate-dependent acid tolerance response (ATR). Catalyzes the transfer of the CoA moiety from formyl-CoA to oxalate. This chain is Formyl-CoA:oxalate CoA-transferase, found in Escherichia coli O6:H1 (strain CFT073 / ATCC 700928 / UPEC).